Reading from the N-terminus, the 236-residue chain is Histone H1 (236 aa).

Basic and acidic residues predominate over residues 1-10 (MPPKKTETKA). 2 disordered regions span residues 1–36 (MPPK…SPST) and 94–236 (KGVF…AEKA). A compositionally biased stretch (low complexity) spans 11–36 (ADASAAAAPAPAAAPTSAPKTKSPST). The region spanning 36–111 (THASYLDMIT…GPSGGTKLAK (76 aa)) is the H15 domain. The segment covering 109 to 122 (LAKKVAKPAPKKAA) has biased composition (basic residues). Basic and acidic residues predominate over residues 123–150 (PKKETKEKKPAAAKKEGAAKKETKEKKA). The segment covering 153–162 (AKKAAAPKKA) has biased composition (low complexity). A compositionally biased stretch (basic and acidic residues) spans 165-174 (PKKEVKEKKA). Residues 202–220 (AKSTAKPAAAKKAAAPKKA) are compositionally biased toward low complexity. Positions 224–236 (KKAEKAEPAAEKA) are enriched in basic and acidic residues.

The protein belongs to the histone H1/H5 family.

The protein resides in the nucleus. The protein localises to the chromosome. Its function is as follows. Could act as an H1-type linker histone. In Neurospora crassa (strain ATCC 24698 / 74-OR23-1A / CBS 708.71 / DSM 1257 / FGSC 987), this protein is Histone H1 (hH1).